The sequence spans 264 residues: Acyl-[acyl-carrier-protein]--UDP-N-acetylglucosamine O-acyltransferase (264 aa).

This sequence belongs to the transferase hexapeptide repeat family. LpxA subfamily. In terms of assembly, homotrimer.

The protein localises to the cytoplasm. It carries out the reaction a (3R)-hydroxyacyl-[ACP] + UDP-N-acetyl-alpha-D-glucosamine = a UDP-3-O-[(3R)-3-hydroxyacyl]-N-acetyl-alpha-D-glucosamine + holo-[ACP]. It functions in the pathway glycolipid biosynthesis; lipid IV(A) biosynthesis; lipid IV(A) from (3R)-3-hydroxytetradecanoyl-[acyl-carrier-protein] and UDP-N-acetyl-alpha-D-glucosamine: step 1/6. Functionally, involved in the biosynthesis of lipid A, a phosphorylated glycolipid that anchors the lipopolysaccharide to the outer membrane of the cell. The chain is Acyl-[acyl-carrier-protein]--UDP-N-acetylglucosamine O-acyltransferase from Chlorobaculum tepidum (strain ATCC 49652 / DSM 12025 / NBRC 103806 / TLS) (Chlorobium tepidum).